A 514-amino-acid polypeptide reads, in one-letter code: uncharacterized protein (514 aa).

This sequence to E.coli YjjI.

This is an uncharacterized protein from Haemophilus influenzae (strain ATCC 51907 / DSM 11121 / KW20 / Rd).